Consider the following 1378-residue polypeptide: DNA-directed RNA polymerase subunit beta' (1378 aa).

Zn(2+)-binding residues include Cys-69, Cys-71, Cys-84, and Cys-87. Mg(2+)-binding residues include Asp-460, Asp-462, and Asp-464. Zn(2+) contacts are provided by Cys-808, Cys-882, Cys-889, and Cys-892.

The protein belongs to the RNA polymerase beta' chain family. The RNAP catalytic core consists of 2 alpha, 1 beta, 1 beta' and 1 omega subunit. When a sigma factor is associated with the core the holoenzyme is formed, which can initiate transcription. It depends on Mg(2+) as a cofactor. The cofactor is Zn(2+).

It carries out the reaction RNA(n) + a ribonucleoside 5'-triphosphate = RNA(n+1) + diphosphate. Functionally, DNA-dependent RNA polymerase catalyzes the transcription of DNA into RNA using the four ribonucleoside triphosphates as substrates. The chain is DNA-directed RNA polymerase subunit beta' from Rickettsia canadensis (strain McKiel).